Here is an 85-residue protein sequence, read N- to C-terminus: UPF0291 protein SEQ_0545 (85 aa).

Residues 62 to 85 (TPEKLRQVQREKGLHGRSLDDPES) form a disordered region.

It belongs to the UPF0291 family.

It is found in the cytoplasm. The polypeptide is UPF0291 protein SEQ_0545 (Streptococcus equi subsp. equi (strain 4047)).